The chain runs to 179 residues: Large ribosomal subunit protein uL6 (179 aa).

Belongs to the universal ribosomal protein uL6 family. In terms of assembly, part of the 50S ribosomal subunit.

In terms of biological role, this protein binds to the 23S rRNA, and is important in its secondary structure. It is located near the subunit interface in the base of the L7/L12 stalk, and near the tRNA binding site of the peptidyltransferase center. In Prochlorococcus marinus (strain NATL2A), this protein is Large ribosomal subunit protein uL6.